The primary structure comprises 311 residues: Formimidoylglutamase (311 aa).

The Mn(2+) site is built by His-127, Asp-152, His-154, Asp-156, Cys-236, and Asp-238.

This sequence belongs to the arginase family. Mn(2+) serves as cofactor.

It catalyses the reaction N-formimidoyl-L-glutamate + H2O = formamide + L-glutamate. It functions in the pathway amino-acid degradation; L-histidine degradation into L-glutamate; L-glutamate from N-formimidoyl-L-glutamate (hydrolase route): step 1/1. Its function is as follows. Catalyzes the conversion of N-formimidoyl-L-glutamate to L-glutamate and formamide. The sequence is that of Formimidoylglutamase from Macrococcus caseolyticus (strain JCSC5402) (Macrococcoides caseolyticum).